Reading from the N-terminus, the 1654-residue chain is Microtubule cross-linking factor 2 (1654 aa).

Residues 1–188 (METPAGESSA…VAASSVGSSR (188 aa)) are disordered. Residues 55–66 (GSATACGTASSA) are compositionally biased toward low complexity. A compositionally biased stretch (pro residues) spans 102–113 (GTGPRPPPPPPS). Positions 132–147 (LGLELALSSDAESAAG) are enriched in low complexity. The tract at residues 209-238 (PGGLVRELEELRSENDYLKDEIEELRAEML) is required for association with Golgi apparatus membrane. Coiled-coil stretches lie at residues 216-279 (LEEL…AERR), 308-349 (SMRL…LQTE), 448-546 (LKLV…YRSE), 816-843 (IKDLQLVLAEAHDSLRGLQEQLSQERQL), and 1079-1113 (SQEKLQLVERLQGEKQQVEQQVKELQNRLSQLQKA). The disordered stretch occupies residues 348–379 (TELDRPREHSLKKRGTRSLGKTDKKPTAQEDS). Over residues 1122–1145 (SDMEKQDNSWKEARSEKTHDKEGV) the composition is skewed to basic and acidic residues. The disordered stretch occupies residues 1122-1146 (SDMEKQDNSWKEARSEKTHDKEGVS). Residues S1165 and S1251 each carry the phosphoserine modification. Residues 1406–1505 (LVSVRSKQIS…HSGSTESVWK (100 aa)) form a KR-rich domain required for microtubules binding region. 3 disordered regions span residues 1427–1450 (RPCCSPKYGSPKLQRRSVSKLDST), 1537–1560 (PTTAAGEESCKKPEPLSPASYHQP), and 1627–1654 (NTIRHSPSKCRLHPSESGWGGEERAAPQ). Residues 1628 to 1638 (TIRHSPSKCRL) show a composition bias toward basic residues.

This sequence belongs to the MTCL family. In terms of assembly, interacts with CLASP2. Interacts with CLASP1. The C-terminal SOGA 25 kDa form occurs as a monomer. Proteolytically cleaved into a C-terminal SOGA 25 kDa form that is detected in plasma. Proteolytically cleaved in primary hepatocytes into a C-terminal SOGA 80 kDa form. Post-translationally, phosphorylated during mitosis in a CDK1-dependent manner. As to expression, expressed in liver (at protein level).

Its subcellular location is the secreted. The protein resides in the cytoplasm. It localises to the cytoskeleton. The protein localises to the golgi apparatus membrane. It is found in the midbody. Microtubule-associated factor that enables integration of the centrosomal and Golgi-associated microtubules on the Golgi membrane, supporting directional migration. Preferentially acts on the perinuclear microtubules accumulated around the Golgi. Associates with the Golgi membrane through the N-terminal coiled-coil region and directly binds microtubules through the C-terminal domain. Required for faithful chromosome segregation during mitosis. Regulates autophagy by playing a role in the reduction of glucose production in an adiponectin- and insulin-dependent manner. This chain is Microtubule cross-linking factor 2 (Mtcl2), found in Mus musculus (Mouse).